A 214-amino-acid chain; its full sequence is Calcineurin B homologous protein 3 (214 aa).

Gly-2 carries the N-myristoyl glycine lipid modification. Residues 110 to 145 form the EF-hand domain; the sequence is CRKDKLRFLFNMYDTDNDSKITLEEYRKVVEELLSG. 5 residues coordinate Ca(2+): Asp-123, Asp-125, Asp-127, Lys-129, and Glu-134.

It belongs to the calcineurin regulatory subunit family. CHP subfamily. As to quaternary structure, monomer. Homodimer.

It is found in the nucleus. Its subcellular location is the cytoplasm. The protein localises to the membrane. The protein resides in the cell membrane. It localises to the cell projection. It is found in the lamellipodium. Its subcellular location is the ruffle membrane. Its function is as follows. Functions as an integral cofactor in cell pH regulation by controlling plasma membrane-type Na(+)/H(+) exchange activity. Promotes the induction of hematopoietic stem cell differentiation toward megakaryocytic lineage. Essential for the coupling of ERK cascade activation with the expression of ETS family genes in megakaryocytic differentiation. Also involved in granulocytic differentiation in a ERK-dependent manner. Inhibits the phosphatase activity of calcineurin. The sequence is that of Calcineurin B homologous protein 3 (tesc) from Xenopus tropicalis (Western clawed frog).